The following is a 626-amino-acid chain: Phosphomethylpyrimidine synthase (626 aa).

Residues 1–22 (MTKQEKAINLSESAQVDQQSVQ) form a disordered region. Positions 10–22 (LSESAQVDQQSVQ) are enriched in polar residues. Substrate-binding positions include Asn232, Met261, Tyr290, His326, 346–348 (SRG), 387–390 (DGLR), and Glu426. His430 is a binding site for Zn(2+). Tyr453 contributes to the substrate binding site. His494 lines the Zn(2+) pocket. 3 residues coordinate [4Fe-4S] cluster: Cys574, Cys577, and Cys582.

Belongs to the ThiC family. As to quaternary structure, homodimer. [4Fe-4S] cluster is required as a cofactor.

The enzyme catalyses 5-amino-1-(5-phospho-beta-D-ribosyl)imidazole + S-adenosyl-L-methionine = 4-amino-2-methyl-5-(phosphooxymethyl)pyrimidine + CO + 5'-deoxyadenosine + formate + L-methionine + 3 H(+). It functions in the pathway cofactor biosynthesis; thiamine diphosphate biosynthesis. Functionally, catalyzes the synthesis of the hydroxymethylpyrimidine phosphate (HMP-P) moiety of thiamine from aminoimidazole ribotide (AIR) in a radical S-adenosyl-L-methionine (SAM)-dependent reaction. This Pseudomonas putida (strain ATCC 47054 / DSM 6125 / CFBP 8728 / NCIMB 11950 / KT2440) protein is Phosphomethylpyrimidine synthase.